We begin with the raw amino-acid sequence, 623 residues long: DNA-directed RNA polymerase subunit gamma (623 aa).

Positions 70, 72, 85, and 88 each coordinate Zn(2+). Aspartate 466, aspartate 468, and aspartate 470 together coordinate Mg(2+).

Belongs to the RNA polymerase beta' chain family. RpoC1 subfamily. In cyanobacteria the RNAP catalytic core is composed of 2 alpha, 1 beta, 1 beta', 1 gamma and 1 omega subunit. When a sigma factor is associated with the core the holoenzyme is formed, which can initiate transcription. It depends on Mg(2+) as a cofactor. Zn(2+) is required as a cofactor.

It catalyses the reaction RNA(n) + a ribonucleoside 5'-triphosphate = RNA(n+1) + diphosphate. In terms of biological role, DNA-dependent RNA polymerase catalyzes the transcription of DNA into RNA using the four ribonucleoside triphosphates as substrates. The polypeptide is DNA-directed RNA polymerase subunit gamma (Acaryochloris marina (strain MBIC 11017)).